Here is a 127-residue protein sequence, read N- to C-terminus: NADPH-dependent 7-cyano-7-deazaguanine reductase (127 aa).

Residue Cys-40 is the Thioimide intermediate of the active site. The active-site Proton donor is Asp-47. Substrate-binding positions include 62-64 (VEL) and 81-82 (HE).

It belongs to the GTP cyclohydrolase I family. QueF type 1 subfamily.

Its subcellular location is the cytoplasm. It carries out the reaction 7-aminomethyl-7-carbaguanine + 2 NADP(+) = 7-cyano-7-deazaguanine + 2 NADPH + 3 H(+). It participates in tRNA modification; tRNA-queuosine biosynthesis. Catalyzes the NADPH-dependent reduction of 7-cyano-7-deazaguanine (preQ0) to 7-aminomethyl-7-deazaguanine (preQ1). This is NADPH-dependent 7-cyano-7-deazaguanine reductase from Campylobacter jejuni (strain RM1221).